The chain runs to 64 residues: Large ribosomal subunit protein bL35 (64 aa).

The interval 1-44 (MPKLKTNRGAAKRFKVKASGRISRARSNHSHILTKKDPKRKRRL) is disordered. Over residues 10–44 (AAKRFKVKASGRISRARSNHSHILTKKDPKRKRRL) the composition is skewed to basic residues.

It belongs to the bacterial ribosomal protein bL35 family.

The chain is Large ribosomal subunit protein bL35 from Halorhodospira halophila (strain DSM 244 / SL1) (Ectothiorhodospira halophila (strain DSM 244 / SL1)).